Reading from the N-terminus, the 453-residue chain is Bis(5'-adenosyl)-triphosphatase ENPP4 (453 aa).

Residues 1-15 (MKLLVILLFSGLITG) form the signal peptide. Residues 16-407 (FRSDSSSSLP…DQWCINLPEA (392 aa)) lie on the Extracellular side of the membrane. The Zn(2+) site is built by Asp-34 and Thr-70. Catalysis depends on Thr-70, which acts as the AMP-threonine intermediate. Residues Asn-91 and Tyr-154 each contribute to the substrate site. N-linked (GlcNAc...) asparagine glycosylation is found at Asn-155 and Asn-166. 4 residues coordinate Zn(2+): Asp-189, His-193, Asp-237, and His-238. Asp-189 is a binding site for substrate. Cys-254 and Cys-287 are disulfide-bonded. Residue Asn-276 is glycosylated (N-linked (GlcNAc...) asparagine). His-336 contributes to the Zn(2+) binding site. N-linked (GlcNAc...) asparagine glycosylation occurs at Asn-386. The cysteines at positions 394 and 401 are disulfide-linked. A helical membrane pass occupies residues 408 to 428 (IAIVIGSLLVLTMLTCLIIIM). Topologically, residues 429–453 (QNRLSVPRPFSRLQLQEDDDDPLIG) are cytoplasmic.

It belongs to the nucleotide pyrophosphatase/phosphodiesterase family. It depends on Zn(2+) as a cofactor. As to expression, expressed on the surface of vascular endothelia.

It localises to the cell membrane. The catalysed reaction is P(1),P(3)-bis(5'-adenosyl) triphosphate + H2O = AMP + ADP + 2 H(+). Its function is as follows. Hydrolyzes extracellular Ap3A into AMP and ADP, and Ap4A into AMP and ATP. Ap3A and Ap4A are diadenosine polyphosphates thought to induce proliferation of vascular smooth muscle cells. Acts as a procoagulant, mediating platelet aggregation at the site of nascent thrombus via release of ADP from Ap3A and activation of ADP receptors. This chain is Bis(5'-adenosyl)-triphosphatase ENPP4 (ENPP4), found in Homo sapiens (Human).